A 336-amino-acid chain; its full sequence is Phosphoribosylformylglycinamidine cyclo-ligase (336 aa).

It belongs to the AIR synthase family.

The protein resides in the cytoplasm. It carries out the reaction 2-formamido-N(1)-(5-O-phospho-beta-D-ribosyl)acetamidine + ATP = 5-amino-1-(5-phospho-beta-D-ribosyl)imidazole + ADP + phosphate + H(+). The protein operates within purine metabolism; IMP biosynthesis via de novo pathway; 5-amino-1-(5-phospho-D-ribosyl)imidazole from N(2)-formyl-N(1)-(5-phospho-D-ribosyl)glycinamide: step 2/2. This is Phosphoribosylformylglycinamidine cyclo-ligase from Caldanaerobacter subterraneus subsp. tengcongensis (strain DSM 15242 / JCM 11007 / NBRC 100824 / MB4) (Thermoanaerobacter tengcongensis).